The primary structure comprises 164 residues: Small ribosomal subunit protein uS5 (164 aa).

Residues Leu-10–Val-73 enclose the S5 DRBM domain.

This sequence belongs to the universal ribosomal protein uS5 family. As to quaternary structure, part of the 30S ribosomal subunit. Contacts proteins S4 and S8.

In terms of biological role, with S4 and S12 plays an important role in translational accuracy. Located at the back of the 30S subunit body where it stabilizes the conformation of the head with respect to the body. In Streptococcus pyogenes serotype M1, this protein is Small ribosomal subunit protein uS5.